Here is a 488-residue protein sequence, read N- to C-terminus: Peptidoglycan endopeptidase LytF (488 aa).

The N-terminal stretch at 1-26 (MKKKLAAGLTASAIVGTTLVVTPAEA) is a signal peptide. 2 LysM domains span residues 27–70 (ATIK…TLTI) and 92–135 (SVYT…KLKV). Disordered stretches follow at residues 70-93 (IPGS…GSSV), 137-176 (GTVS…TGTY), and 218-239 (KSSG…TSAT). Composition is skewed to low complexity over residues 72–93 (GSKS…GSSV) and 140–172 (SSSS…SSSS). Residues 174 to 217 (GTYKVQLGDSLWKIANKVNMSIAELKVLNNLKSDTIYVNQVLKT) form the LysM 3 domain. The region spanning 240-283 (TKYTVKSGDSLWKIANNYNLTVQQIRNINNLKSDVLYVGQVLKL) is the LysM 4 domain. The disordered stretch occupies residues 286–306 (KASSGSSSSSSSSSNASSGTT). A LysM 5 domain is found at 307–350 (TTYTVKSGDSLWVIAQKFNVTAQQIREKNNLKTDVLQVGQKLVI). The region spanning 370-488 (SAKINTMISA…QRYLGAKRYF (119 aa)) is the NlpC/P60 domain. Catalysis depends on Cys400, which acts as the Nucleophile. The active-site Proton acceptor is the His449. Asn461 is a catalytic residue.

Belongs to the peptidase C40 family.

The protein localises to the secreted. Its subcellular location is the cell wall. Is inhibited in vitro by para-hydroxymercuribenzoate, a sulfydryl inhibitor. Its function is as follows. Cell wall hydrolase that cleaves gamma-D-glutamate-meso-diaminopimelate bonds in peptidoglycan. LytF is necessary and sufficient for vegetative daughter cell separation, and also seems to play a role in cell autolysis. In Bacillus subtilis (strain 168), this protein is Peptidoglycan endopeptidase LytF (lytF).